A 261-amino-acid chain; its full sequence is Cytochrome c oxidase subunit 3 (261 aa).

Residues 1-15 lie on the Mitochondrial matrix side of the membrane; the sequence is MTHQTHAYHMVNPSP. The chain crosses the membrane as a helical span at residues 16 to 34; that stretch reads WPLTGALSALLMTSGLTMW. The Mitochondrial intermembrane segment spans residues 35-40; that stretch reads FHFNSM. A helical transmembrane segment spans residues 41 to 66; the sequence is TLLTLGLTTNMLTMYQWWRDIIREST. The Mitochondrial matrix segment spans residues 67-72; sequence FQGHHT. A helical membrane pass occupies residues 73 to 105; that stretch reads PNVQKGLRYGMILFIISEVLFFTGFFWAFYHSS. The Mitochondrial intermembrane segment spans residues 106–128; it reads LAPTPELGGCWPPTGIHPLNPLE. A helical transmembrane segment spans residues 129–152; it reads VPLLNTSVLLASGVSITWAHHSLM. Over 153-155 the chain is Mitochondrial matrix; it reads EGN. A helical membrane pass occupies residues 156–183; that stretch reads RNHMLQALFITISLGVYFTLLQASEYYE. At 184–190 the chain is on the mitochondrial intermembrane side; that stretch reads APFTISD. A helical membrane pass occupies residues 191–223; that stretch reads GVYGSTFFVATGFHGLHVIIGSTFLIVCFFRQL. The Mitochondrial matrix segment spans residues 224 to 232; that stretch reads KFHFTSNHH. A helical transmembrane segment spans residues 233–256; sequence FGFEAAAWYWHFVDVVWLFLYVSI. Residues 257-261 lie on the Mitochondrial intermembrane side of the membrane; it reads YWWGS.

It belongs to the cytochrome c oxidase subunit 3 family. Component of the cytochrome c oxidase (complex IV, CIV), a multisubunit enzyme composed of 14 subunits. The complex is composed of a catalytic core of 3 subunits MT-CO1, MT-CO2 and MT-CO3, encoded in the mitochondrial DNA, and 11 supernumerary subunits COX4I, COX5A, COX5B, COX6A, COX6B, COX6C, COX7A, COX7B, COX7C, COX8 and NDUFA4, which are encoded in the nuclear genome. The complex exists as a monomer or a dimer and forms supercomplexes (SCs) in the inner mitochondrial membrane with NADH-ubiquinone oxidoreductase (complex I, CI) and ubiquinol-cytochrome c oxidoreductase (cytochrome b-c1 complex, complex III, CIII), resulting in different assemblies (supercomplex SCI(1)III(2)IV(1) and megacomplex MCI(2)III(2)IV(2)).

The protein resides in the mitochondrion inner membrane. The catalysed reaction is 4 Fe(II)-[cytochrome c] + O2 + 8 H(+)(in) = 4 Fe(III)-[cytochrome c] + 2 H2O + 4 H(+)(out). Its function is as follows. Component of the cytochrome c oxidase, the last enzyme in the mitochondrial electron transport chain which drives oxidative phosphorylation. The respiratory chain contains 3 multisubunit complexes succinate dehydrogenase (complex II, CII), ubiquinol-cytochrome c oxidoreductase (cytochrome b-c1 complex, complex III, CIII) and cytochrome c oxidase (complex IV, CIV), that cooperate to transfer electrons derived from NADH and succinate to molecular oxygen, creating an electrochemical gradient over the inner membrane that drives transmembrane transport and the ATP synthase. Cytochrome c oxidase is the component of the respiratory chain that catalyzes the reduction of oxygen to water. Electrons originating from reduced cytochrome c in the intermembrane space (IMS) are transferred via the dinuclear copper A center (CU(A)) of subunit 2 and heme A of subunit 1 to the active site in subunit 1, a binuclear center (BNC) formed by heme A3 and copper B (CU(B)). The BNC reduces molecular oxygen to 2 water molecules using 4 electrons from cytochrome c in the IMS and 4 protons from the mitochondrial matrix. In Antidorcas marsupialis (Springbok), this protein is Cytochrome c oxidase subunit 3 (MT-CO3).